The chain runs to 269 residues: Zinc transporter ZupT (269 aa).

The next 8 membrane-spanning stretches (helical) occupy residues 12 to 32, 41 to 61, 75 to 95, 126 to 146, 152 to 172, 187 to 207, 211 to 231, and 249 to 269; these read AFSI…LVMF, LSFG…TEIF, DHAF…IALI, MMAA…TFFA, AVGM…GISI, VWAC…GYLV, FLSP…MVFL, and TVYG…LFHF. Residues asparagine 136 and glutamate 139 each coordinate Fe(2+). Zn(2+) is bound by residues glutamate 139 and histidine 164. Fe(2+)-binding residues include asparagine 165, glutamate 168, and glutamate 197. Glutamate 168 contacts Zn(2+).

Belongs to the ZIP transporter (TC 2.A.5) family. ZupT subfamily.

It localises to the cell inner membrane. The catalysed reaction is Zn(2+)(in) = Zn(2+)(out). Mediates zinc uptake. May also transport other divalent cations. In Neisseria meningitidis serogroup A / serotype 4A (strain DSM 15465 / Z2491), this protein is Zinc transporter ZupT.